Reading from the N-terminus, the 135-residue chain is Large ribosomal subunit protein uL16c (135 aa).

The protein belongs to the universal ribosomal protein uL16 family. Part of the 50S ribosomal subunit.

The protein localises to the plastid. Its subcellular location is the chloroplast. In Phaseolus vulgaris (Kidney bean), this protein is Large ribosomal subunit protein uL16c.